We begin with the raw amino-acid sequence, 278 residues long: Putative ABC transporter ATP-binding protein MTBMA_c05830 (278 aa).

Positions 4-239 (IEAVNIRYTY…IDTIRGADLR (236 aa)) constitute an ABC transporter domain. 37–44 (GPNGAGKS) provides a ligand contact to ATP.

This sequence belongs to the ABC transporter superfamily.

The protein localises to the cell membrane. Functionally, probably part of an ABC transporter complex. Responsible for energy coupling to the transport system. The protein is Putative ABC transporter ATP-binding protein MTBMA_c05830 of Methanothermobacter marburgensis (strain ATCC BAA-927 / DSM 2133 / JCM 14651 / NBRC 100331 / OCM 82 / Marburg) (Methanobacterium thermoautotrophicum).